Consider the following 529-residue polypeptide: Type I restriction enzyme StySPI methylase subunit (529 aa).

S-adenosyl-L-methionine-binding positions include 148–153, 178–180, and E216; these read QYFTPR and TAG. The interval 424 to 443 is disordered; the sequence is AEESEVADSEENKNADQHQA.

The protein belongs to the N(4)/N(6)-methyltransferase family. The type I restriction/modification system is composed of three polypeptides R, M and S; the restriction enzyme has stoichiometry R(2)M(2)S(1) while the methyltransferase is M(2)S(1).

The catalysed reaction is a 2'-deoxyadenosine in DNA + S-adenosyl-L-methionine = an N(6)-methyl-2'-deoxyadenosine in DNA + S-adenosyl-L-homocysteine + H(+). The subtype gamma methyltransferase (M) subunit of a type I restriction enzyme. The M and S subunits together form a methyltransferase (MTase) that methylates A-2 on the top strand and A-3 on the bottom strand of the sequence 5'-AACN(6)GTRC-3'. In the presence of the R subunit the complex can also act as an endonuclease, binding to the same target sequence but cutting the DNA some distance from this site. Whether the DNA is cut or modified depends on the methylation state of the target sequence. When the target site is unmodified, the DNA is cut. When the target site is hemimethylated, the complex acts as a maintenance MTase modifying the DNA so that both strands become methylated. After locating a non-methylated recognition site, the enzyme complex serves as a molecular motor that translocates DNA in an ATP-dependent manner until a collision occurs that triggers cleavage. This is Type I restriction enzyme StySPI methylase subunit from Salmonella potsdam.